The sequence spans 391 residues: GTPase Obg (391 aa).

Residues 1–159 enclose the Obg domain; that stretch reads MKFIDEALIR…RDLLLELMLL (159 aa). The OBG-type G domain maps to 160-333; the sequence is ADVGMLGLPN…LTRDIMDFIE (174 aa). GTP is bound by residues 166–173, 191–195, 213–216, 283–286, and 314–316; these read GLPNAGKS, FTTLV, DIPG, NKID, and SAA. Residues Ser-173 and Thr-193 each coordinate Mg(2+).

This sequence belongs to the TRAFAC class OBG-HflX-like GTPase superfamily. OBG GTPase family. Monomer. Mg(2+) is required as a cofactor.

It localises to the cytoplasm. Functionally, an essential GTPase which binds GTP, GDP and possibly (p)ppGpp with moderate affinity, with high nucleotide exchange rates and a fairly low GTP hydrolysis rate. Plays a role in control of the cell cycle, stress response, ribosome biogenesis and in those bacteria that undergo differentiation, in morphogenesis control. This chain is GTPase Obg, found in Haemophilus ducreyi (strain 35000HP / ATCC 700724).